A 65-amino-acid chain; its full sequence is Alpha-conotoxin Mr1.1 (65 aa).

The N-terminal stretch at 1-21 (MGMRMMFTVFLLVVLATTVVS) is a signal peptide. Residues 22–48 (FTSDRASDGRKAAAKDKASDLVALTVK) constitute a propeptide that is removed on maturation. Disulfide bonds link Cys50/Cys56 and Cys51/Cys64. Positions 52–54 (SHP) are ser-Xaa-Pro motif, crucial for potent interaction with nAChR. Position 64 is a cysteine amide (Cys64).

It belongs to the conotoxin A superfamily. In terms of tissue distribution, expressed by the venom duct.

It is found in the secreted. Alpha-conotoxins act on postsynaptic membranes, they bind to the nicotinic acetylcholine receptors (nAChR) and thus inhibit them. This toxin potently and reversibly inhibits alpha-9-alpha-10/CHRNA9-CHRNA10 (IC(50)=92 nM (human) and IC(50)=8.3 nM (rat)) and human alpha3-beta-2/CHRNA3-CHRNB2 nAChR (IC(50)=218.9 nM). Also moderately inhibits human alpha-3-beta-4/CHRNA3-CHRNB4 (60% inhibition at 1 uM), rat alpha-7/CHRNA7 (65% inhibition at 1 uM) and rat alpha-3-beta-2/CHRNA3-CHRNB2 nAChR (50-70% inhibition at 10 uM). In two rat pain models, this toxin shows analgesic effect. In Conus marmoreus (Marble cone), this protein is Alpha-conotoxin Mr1.1.